The primary structure comprises 312 residues: Aspartoacylase (312 aa).

Residues His20 and Glu23 each contribute to the Zn(2+) site. Arg62, Asn69, and Arg70 together coordinate N-acetyl-L-aspartate. His115 provides a ligand contact to Zn(2+). Tyr163 and Arg167 together coordinate N-acetyl-L-aspartate. Glu177 functions as the Proton donor/acceptor in the catalytic mechanism. Residue Tyr287 participates in N-acetyl-L-aspartate binding.

This sequence belongs to the AspA/AstE family. Aspartoacylase subfamily. Homodimer. Requires Zn(2+) as cofactor. Detected in kidney proximal tubule cells (at protein level).

The protein localises to the cytoplasm. The protein resides in the nucleus. The catalysed reaction is an N-acyl-L-aspartate + H2O = a carboxylate + L-aspartate. It catalyses the reaction N-acetyl-L-aspartate + H2O = L-aspartate + acetate. In terms of biological role, catalyzes the deacetylation of N-acetylaspartic acid (NAA) to produce acetate and L-aspartate. NAA occurs in high concentration in brain and its hydrolysis NAA plays a significant part in the maintenance of intact white matter. In other tissues it acts as a scavenger of NAA from body fluids. The polypeptide is Aspartoacylase (Rattus norvegicus (Rat)).